The sequence spans 718 residues: GMP synthase [glutamine-hydrolyzing] (718 aa).

The 205-residue stretch at 43–247 folds into the Glutamine amidotransferase type-1 domain; that stretch reads VIVILDAGSQ…LIDICGCSAN (205 aa). Residues C128, H221, and E223 each act as for GATase activity in the active site. Residues 248-457 form the GMPS ATP-PPase domain; the sequence is YTLDDREQQA…LGLSDSLVWR (210 aa). 275–281 is an ATP binding site; sequence SGGVDST.

As to quaternary structure, homodimer.

The enzyme catalyses XMP + L-glutamine + ATP + H2O = GMP + L-glutamate + AMP + diphosphate + 2 H(+). Its pathway is purine metabolism; GMP biosynthesis; GMP from XMP (L-Gln route): step 1/1. The sequence is that of GMP synthase [glutamine-hydrolyzing] (guaA) from Dictyostelium discoideum (Social amoeba).